A 726-amino-acid polypeptide reads, in one-letter code: MIVLDRMKISFMLEDSNDNNNNNNNNNNSNNNNNNNNNNGYCDDSSATSSPTGQDSTIDRPNSPSSSIKFTYPSKNSIVTSPSSLQLPSPSFSSSSSSSSSSSSSSLSNKDLMEDGVILLSKIASPSKSSENSPTIHTSSLSPNSYHPYQKYQKPKLHVDHYVSNNNNNNNNNNNNNKKSDYSSELYNTSPSISSKTTPNGSSTNNSPFLSPRQPLFDHSNNNNNNNNDRNENNTTKQQQQLNQLNQLNNNLNSVNNSLFDYNGNSQELQQLIPSSPTRSPSGGSGSESEENDGESSPNNMRSLACNKHSKWKKKCPESCTGRLSPVEIPIATRKLWSQEECCRLLEMVFQRDPQSVTSKESELRWRSIASTLGRTVTSTRKKYMRLMNKWSPRPHCVHPISKLIDQNEKLLLLQTSTEAQQQVQQQQINLQQFYQASQQMTQNLPPQQQQYHQQQMNQQQQLSQQLSQQLTQYKQFQQQQQQNNQQFQQHLQLQQQQLAAQAQVQHQQAQQNLQKQIQQQQKQKPQNGNTQQNNKLKNQNQNQNQNQNQNQNQNQNQNQNYNQNHNQNQNQNYNQQGSNQYLSSISSYSNNNNNNNNNNNSSNNNNNYYNNNNNNNNNNNSNNNSYYNNNNGNNNNGNNYNNNYRSSLSPPHSPHESDRQSPQQKSNNENQQNFPKFRKPIGRPAQSCEAHRNEHQKCPPLCPNRPENLNNNNNNNNNNYNNYHN.

Disordered stretches follow at residues 15–109, 124–149, 161–239, and 272–303; these read DSND…SLSN, ASPS…YHPY, HYVS…TKQQ, and LIPS…NMRS. Low complexity predominate over residues 18–39; sequence DNNNNNNNNNNSNNNNNNNNNN. A compositionally biased stretch (polar residues) spans 45 to 80; the sequence is SSATSSPTGQDSTIDRPNSPSSSIKFTYPSKNSIVT. Low complexity predominate over residues 81 to 108; sequence SPSSLQLPSPSFSSSSSSSSSSSSSSLS. A compositionally biased stretch (polar residues) spans 124–147; it reads ASPSKSSENSPTIHTSSLSPNSYH. Low complexity predominate over residues 165 to 177; sequence NNNNNNNNNNNNN. A compositionally biased stretch (polar residues) spans 183–209; that stretch reads SSELYNTSPSISSKTTPNGSSTNNSPF. Residues 221-239 show a composition bias toward low complexity; the sequence is NNNNNNNNDRNENNTTKQQ. Positions 329–388 constitute a Myb-like domain; it reads IPIATRKLWSQEECCRLLEMVFQRDPQSVTSKESELRWRSIASTLGRTVTSTRKKYMRLM. Residues 516–651 are compositionally biased toward low complexity; it reads KQIQQQQKQK…NNNYRSSLSP (136 aa). The interval 516 to 726 is disordered; it reads KQIQQQQKQK…NNNNYNNYHN (211 aa). Residues 661–675 are compositionally biased toward polar residues; the sequence is QSPQQKSNNENQQNF. Positions 709-726 are enriched in low complexity; the sequence is NLNNNNNNNNNNYNNYHN.

The polypeptide is Myb-like protein Z (mybZ) (Dictyostelium discoideum (Social amoeba)).